The primary structure comprises 597 residues: Elongation factor 4 (597 aa).

Residues 4–181 (SKIRNFSIIA…AIVDYVPAPK (178 aa)) form the tr-type G domain. Residues 16–21 (DHGKST) and 128–131 (NKID) contribute to the GTP site.

Belongs to the TRAFAC class translation factor GTPase superfamily. Classic translation factor GTPase family. LepA subfamily.

The protein resides in the cell membrane. It catalyses the reaction GTP + H2O = GDP + phosphate + H(+). In terms of biological role, required for accurate and efficient protein synthesis under certain stress conditions. May act as a fidelity factor of the translation reaction, by catalyzing a one-codon backward translocation of tRNAs on improperly translocated ribosomes. Back-translocation proceeds from a post-translocation (POST) complex to a pre-translocation (PRE) complex, thus giving elongation factor G a second chance to translocate the tRNAs correctly. Binds to ribosomes in a GTP-dependent manner. This Mycoplasmopsis agalactiae (strain NCTC 10123 / CIP 59.7 / PG2) (Mycoplasma agalactiae) protein is Elongation factor 4.